The primary structure comprises 208 residues: dITP/XTP pyrophosphatase (208 aa).

Residue serine 16 to lysine 21 coordinates substrate. The active-site Proton acceptor is aspartate 79. Aspartate 79 is a Mg(2+) binding site. Residues serine 80, phenylalanine 166–aspartate 169, lysine 189, and histidine 194–arginine 195 contribute to the substrate site.

This sequence belongs to the HAM1 NTPase family. Homodimer. It depends on Mg(2+) as a cofactor.

The enzyme catalyses XTP + H2O = XMP + diphosphate + H(+). The catalysed reaction is dITP + H2O = dIMP + diphosphate + H(+). It carries out the reaction ITP + H2O = IMP + diphosphate + H(+). In terms of biological role, pyrophosphatase that catalyzes the hydrolysis of nucleoside triphosphates to their monophosphate derivatives, with a high preference for the non-canonical purine nucleotides XTP (xanthosine triphosphate), dITP (deoxyinosine triphosphate) and ITP. Seems to function as a house-cleaning enzyme that removes non-canonical purine nucleotides from the nucleotide pool, thus preventing their incorporation into DNA/RNA and avoiding chromosomal lesions. This Acinetobacter baumannii (strain AB307-0294) protein is dITP/XTP pyrophosphatase.